The primary structure comprises 1219 residues: MPKIVLNGVTVDFPFQPYKCQQEYMTKVLECLQQKVNGILESPTGTGKTLCLLCTTLAWREHLRDGISARKIAERAQGELFPDRALSSWGNAAAAAGDPIACYTDIPKIIYASRTHSQLTQVINELRNTSYRPKVCVLGSREQLCIHPEVKKQESNHLQIHLCRKKVASRSCHFYNNVEEKSLEQELASPILDIEDLVKSGSKHRVCPYYLSRNLKQQADIIFMPYNYLLDAKSRRAHNIDLKGTVVIFDEAHNVEKMCEESASFDLTPHDLASGLDVIDQVLEEQTKAAQQGEPHPEFSADSPSPGLNMELEDIAKLKMILLRLEGAIDAVELPGDDSGVTKPGSYIFELFAEAQITFQTKGCILDSLDQIIQHLAGRAGVFTNTAGLQKLADIIQIVFSVDPSEGSPGSPAGLGALQSYKVHIHPDAGHRRTAQRSDAWSTTAARKRGKVLSYWCFSPGHSMHELVRQGVRSLILTSGTLAPVSSFALEMQIPFPVCLENPHIIDKHQIWVGVVPRGPDGAQLSSAFDRRFSEECLSSLGKALGNIARVVPYGLLIFFPSYPVMEKSLEFWRARDLARKMEALKPLFVEPRSKGSFSETISAYYARVAAPGSTGATFLAVCRGKASEGLDFSDTNGRGVIVTGLPYPPRMDPRVVLKMQFLDEMKGQGGAGGQFLSGQEWYRQQASRAVNQAIGRVIRHRQDYGAVFLCDHRFAFADARAQLPSWVRPHVRVYDNFGHVIRDVAQFFRVAERTMPAPAPRATAPSVRGEDAVSEAKSPGPFFSTRKAKSLDLHVPSLKQRSSGSPAAGDPESSLCVEYEQEPVPARQRPRGLLAALEHSEQRAGSPGEEQAHSCSTLSLLSEKRPAEEPRGGRKKIRLVSHPEEPVAGAQTDRAKLFMVAVKQELSQANFATFTQALQDYKGSDDFAALAACLGPLFAEDPKKHNLLQGFYQFVRPHHKQQFEEVCIQLTGRGCGYRPEHSIPRRQRAQPVLDPTGRTAPDPKLTVSTAAAQQLDPQEHLNQGRPHLSPRPPPTGDPGSQPQWGSGVPRAGKQGQHAVSAYLADARRALGSAGCSQLLAALTAYKQDDDLDKVLAVLAALTTAKPEDFPLLHRFSMFVRPHHKQRFSQTCTDLTGRPYPGMEPPGPQEERLAVPPVLTHRAPQPGPSRSEKTGKTQSKISSFLRQRPAGTVGAGGEDAGPSQSSGPPHGPAASEWGL.

One can recognise a Helicase ATP-binding domain in the interval 7 to 296; that stretch reads NGVTVDFPFQ…TKAAQQGEPH (290 aa). Residue 42–49 participates in ATP binding; that stretch reads SPTGTGKT. 4 residues coordinate [4Fe-4S] cluster: Cys145, Cys163, Cys172, and Cys207. The short motif at 151–167 is the Nuclear localization signal element; sequence KKQESNHLQIHLCRKKV. The DEAH box signature appears at 250-253; that stretch reads DEAH. 7 disordered regions span residues 287 to 306, 757 to 786, 839 to 877, 979 to 1005, 1017 to 1054, 1132 to 1151, and 1159 to 1219; these read TKAAQQGEPHPEFSADSPSP, PAPAPRATAPSVRGEDAVSEAKSPGPFFST, EHSEQRAGSPGEEQAHSCSTLSLLSEKRPAEEPRGGRKK, RPEHSIPRRQRAQPVLDPTGRTAPDPK, DPQEHLNQGRPHLSPRPPPTGDPGSQPQWGSGVPRAGK, CTDLTGRPYPGMEPPGPQEE, and LTHR…EWGL. Residues 757-766 show a composition bias toward low complexity; sequence PAPAPRATAP. Basic and acidic residues predominate over residues 863-873; the sequence is SEKRPAEEPRG. The Nuclear localization signal motif lies at 871–877; sequence PRGGRKK. The span at 1176–1185 shows a compositional bias: polar residues; it reads KTQSKISSFL. A PIP-box motif is present at residues 1178–1185; the sequence is QSKISSFL. The segment covering 1200 to 1219 has biased composition (low complexity); that stretch reads AGPSQSSGPPHGPAASEWGL.

This sequence belongs to the helicase family. RAD3/XPD subfamily. As to quaternary structure, interacts with TERF1. Interacts (via PIP-box) with PCNA; the interaction is direct and essential for suppressing telomere fragility. Interacts with MMS19; the interaction mediates the association of RTEL1 with the cytosolic iron-sulfur protein assembly (CIA) complex.

It localises to the nucleus. The catalysed reaction is ATP + H2O = ADP + phosphate + H(+). Functionally, a probable ATP-dependent DNA helicase implicated in telomere-length regulation, DNA repair and the maintenance of genomic stability. Acts as an anti-recombinase to counteract toxic recombination and limit crossover during meiosis. Regulates meiotic recombination and crossover homeostasis by physically dissociating strand invasion events and thereby promotes noncrossover repair by meiotic synthesis dependent strand annealing (SDSA) as well as disassembly of D loop recombination intermediates. Also disassembles T loops and prevents telomere fragility by counteracting telomeric G4-DNA structures, which together ensure the dynamics and stability of the telomere. This chain is Regulator of telomere elongation helicase 1, found in Homo sapiens (Human).